Here is a 651-residue protein sequence, read N- to C-terminus: Probable potassium transport system protein Kup (651 aa).

12 consecutive transmembrane segments (helical) span residues L41 to F61, V82 to V102, L130 to P150, I163 to L183, V194 to L214, F235 to T255, W276 to L296, M309 to A329, I366 to F386, A395 to M415, A426 to I446, and E450 to V470.

This sequence belongs to the HAK/KUP transporter (TC 2.A.72) family.

It is found in the cell inner membrane. The enzyme catalyses K(+)(in) + H(+)(in) = K(+)(out) + H(+)(out). Transport of potassium into the cell. Likely operates as a K(+):H(+) symporter. This chain is Probable potassium transport system protein Kup, found in Brucella ovis (strain ATCC 25840 / 63/290 / NCTC 10512).